A 278-amino-acid chain; its full sequence is ADP-dependent (S)-NAD(P)H-hydrate dehydratase (278 aa).

The YjeF C-terminal domain occupies T5–F272. Residues A40, G103, and H152 each coordinate (6S)-NADPHX. G214 is an AMP binding site. D215 contributes to the (6S)-NADPHX binding site.

This sequence belongs to the NnrD/CARKD family. Homotetramer. The cofactor is Mg(2+).

The catalysed reaction is (6S)-NADHX + ADP = AMP + phosphate + NADH + H(+). It catalyses the reaction (6S)-NADPHX + ADP = AMP + phosphate + NADPH + H(+). Functionally, catalyzes the dehydration of the S-form of NAD(P)HX at the expense of ADP, which is converted to AMP. Together with NAD(P)HX epimerase, which catalyzes the epimerization of the S- and R-forms, the enzyme allows the repair of both epimers of NAD(P)HX, a damaged form of NAD(P)H that is a result of enzymatic or heat-dependent hydration. The protein is ADP-dependent (S)-NAD(P)H-hydrate dehydratase of Lactiplantibacillus plantarum (strain ATCC BAA-793 / NCIMB 8826 / WCFS1) (Lactobacillus plantarum).